A 376-amino-acid polypeptide reads, in one-letter code: D-alanine--D-alanine ligase (376 aa).

Positions 155–361 (KIIFEKAGIP…YPELIEKLID (207 aa)) constitute an ATP-grasp domain. 188–243 (EEKFSYPVFVKPSNAGSSVGVSKAHDKNELKEALIYAARYDRKVLIEEFINGREVE) lines the ATP pocket. Mg(2+) is bound by residues Asp314, Glu328, and Asn330.

The protein belongs to the D-alanine--D-alanine ligase family. Mg(2+) is required as a cofactor. Requires Mn(2+) as cofactor.

The protein localises to the cytoplasm. The enzyme catalyses 2 D-alanine + ATP = D-alanyl-D-alanine + ADP + phosphate + H(+). Its pathway is cell wall biogenesis; peptidoglycan biosynthesis. In terms of biological role, cell wall formation. This chain is D-alanine--D-alanine ligase, found in Acetivibrio thermocellus (strain ATCC 27405 / DSM 1237 / JCM 9322 / NBRC 103400 / NCIMB 10682 / NRRL B-4536 / VPI 7372) (Clostridium thermocellum).